A 407-amino-acid chain; its full sequence is Probable NADPH dehydrogenase (407 aa).

Threonine 49 and glutamine 124 together coordinate FMN. 201-204 (HGAH) contributes to the substrate binding site. Tyrosine 206 (proton donor) is an active-site residue. 2 residues coordinate FMN: arginine 254 and arginine 357.

It belongs to the NADH:flavin oxidoreductase/NADH oxidase family. It depends on FMN as a cofactor.

It catalyses the reaction A + NADPH + H(+) = AH2 + NADP(+). Oxidoreductase that binds mammalian estrogens with high affinity. The polypeptide is Probable NADPH dehydrogenase (Candida albicans (Yeast)).